Reading from the N-terminus, the 237-residue chain is MAQSVTGIQIGGMSFPPSVKPPGSGNTFFLGGAGVRGMEIQGNFVKFTAIGVYLEDKAVPALAVKWKGKTAEELTESVEFFREIVTGPFEKFTQVTMILPLTGQQYSEKVSENCVAIWKKFGIYTDAEAKAIEKFIEVFKDQTFPPGASILFTQSPDGSLTIGFSKDGCIPEVGNAVIENKLLSESVLESIIGKPGVSPEARKSVATRLSELLKESDHCVAGNGKVDECTKEAEVKA.

Thr-48, Asn-113, and Ser-190 together coordinate substrate.

The protein belongs to the chalcone isomerase family.

The enzyme catalyses a chalcone = a flavanone.. Its pathway is secondary metabolite biosynthesis; flavonoid biosynthesis. Functionally, catalyzes the intramolecular cyclization of bicyclic chalcones into tricyclic (S)-flavanones. Responsible for the isomerization of 4,2',4',6'-tetrahydroxychalcone (also termed chalcone) into naringenin. This chain is Chalcone--flavanone isomerase 1 (CHI1), found in Fragaria ananassa (Strawberry).